Here is a 159-residue protein sequence, read N- to C-terminus: Endoribonuclease YbeY (159 aa).

Zn(2+) is bound by residues His-117, His-121, and His-127.

Belongs to the endoribonuclease YbeY family. Requires Zn(2+) as cofactor.

It localises to the cytoplasm. Its function is as follows. Single strand-specific metallo-endoribonuclease involved in late-stage 70S ribosome quality control and in maturation of the 3' terminus of the 16S rRNA. The sequence is that of Endoribonuclease YbeY from Azorhizobium caulinodans (strain ATCC 43989 / DSM 5975 / JCM 20966 / LMG 6465 / NBRC 14845 / NCIMB 13405 / ORS 571).